The chain runs to 256 residues: DNA repair protein RecO (256 aa).

It belongs to the RecO family.

In terms of biological role, involved in DNA repair and RecF pathway recombination. This Delftia acidovorans (strain DSM 14801 / SPH-1) protein is DNA repair protein RecO.